The sequence spans 80 residues: Metallothionein-like protein type 2, MT2-28 (80 aa).

The protein belongs to the metallothionein superfamily. Type 15 family.

In terms of biological role, metallothioneins have a high content of cysteine residues that bind various heavy metals. This is Metallothionein-like protein type 2, MT2-28 from Brassica juncea (Indian mustard).